A 353-amino-acid polypeptide reads, in one-letter code: MAVVTMRQLLESGVHFGHQTRRWNPKMKRFIFTERNGIYIIDLQQSLTDIDRAFSFVKDTVAHGGSILFVGTKKQAQEAVAEQASRVGMPYVNQRWLGGMLTNFQTVSKRLSRLKELEEIDFDDVAASGRTKKELLMMRREKDKLERTLGGIREMAKVPSAVWIVDTKKEHLAVAEARKLNIPVVAILDTNCDPDEVDYPIPGNDDAIRAVGLLTRVIADAVAEGTVARHGGSAPGEAGTAEEPLAEWERELLQGDTDEQSSAANTEEPTPAEAEALEAPADTPAEPLAAEADGETVAEAPAEVETAAEAPAEAEAEVEAESATPAEAEVEAESATPAEAEAETPAESTDEQA.

The segment at 256–353 (DTDEQSSAAN…TPAESTDEQA (98 aa)) is disordered. Composition is skewed to low complexity over residues 263-311 (AANT…AEAP) and 321-339 (ESATPAEAEVEAESATPAE). Positions 340-353 (AEAETPAESTDEQA) are enriched in acidic residues.

It belongs to the universal ribosomal protein uS2 family.

This chain is Small ribosomal subunit protein uS2, found in Beutenbergia cavernae (strain ATCC BAA-8 / DSM 12333 / CCUG 43141 / JCM 11478 / NBRC 16432 / NCIMB 13614 / HKI 0122).